The primary structure comprises 143 residues: Beta/delta-urticatoxin-Uf2a (143 aa).

An N-terminal signal peptide occupies residues M1 to A18. Residues F19–N80 constitute a propeptide that is removed on maturation. Cystine bridges form between C83-C100, C90-C105, C99-C113, C115-C129, C122-C134, and C128-C142.

It belongs to the urticatoxin-2 family. In terms of tissue distribution, expressed in trichomes, that are stiff epidermal hairs located on the surface of petioles and leaves.

The protein resides in the secreted. Its function is as follows. Plant defense neurotoxin that causes pain and systemic symptoms in mammals via modulation of voltage-gated sodium channels (Nav). Potent modulator of human Nav1.5/SCN5A (EC(50)=55 nM), Nav1.6/SCN8A (EC(50)=0.86 nM), and Nav1.7/SCN9A (EC(50)=208 nM), where it shifts the activation threshold to more negative potentials and delays fast inactivation. Also shifts the voltage-dependence of steady-state fast inactivation of Nav1.6/SCN8A, but not that of Nav1.5/SCN5A or Nav1.7/SCN9A. On Nav1.7/SCN9A, principally acts by binding to extracellular loops of domain IV (Nav site 3). Does not affect current response of the tetrodotoxin (TTX)-resistant Nav1.8/SCN10A sodium channel. In vivo, intraplantar injection into mice causes numerous dose-dependent, immediate, and long-lasting spontaneous pain behaviors, while no swelling is observed in the injected paw. At the highest doses tested, systemic symptoms including hypokinesia and hypersalivation are observed. This Urtica ferox (Tree nettle) protein is Beta/delta-urticatoxin-Uf2a.